A 259-amino-acid chain; its full sequence is Phosphatidylglycerol--prolipoprotein diacylglyceryl transferase (259 aa).

4 consecutive transmembrane segments (helical) span residues 12 to 32 (LSLH…VYLA), 46 to 66 (IIDF…IYYV), 83 to 103 (IWNG…VLFV), and 109 to 129 (VLNP…AQAI). A 1,2-diacyl-sn-glycero-3-phospho-(1'-sn-glycerol) is bound at residue Arg-131. 3 helical membrane-spanning segments follow: residues 167–187 (VPTF…IMVW), 194–214 (LLDG…RLVI), and 226–246 (GIRV…VFIF).

The protein belongs to the Lgt family.

Its subcellular location is the cell membrane. It carries out the reaction L-cysteinyl-[prolipoprotein] + a 1,2-diacyl-sn-glycero-3-phospho-(1'-sn-glycerol) = an S-1,2-diacyl-sn-glyceryl-L-cysteinyl-[prolipoprotein] + sn-glycerol 1-phosphate + H(+). It functions in the pathway protein modification; lipoprotein biosynthesis (diacylglyceryl transfer). Functionally, catalyzes the transfer of the diacylglyceryl group from phosphatidylglycerol to the sulfhydryl group of the N-terminal cysteine of a prolipoprotein, the first step in the formation of mature lipoproteins. In Streptococcus equi subsp. zooepidemicus (strain MGCS10565), this protein is Phosphatidylglycerol--prolipoprotein diacylglyceryl transferase.